Reading from the N-terminus, the 215-residue chain is Soluble inorganic pyrophosphatase (215 aa).

Positions methionine 1–proline 21 are enriched in low complexity. The disordered stretch occupies residues methionine 1–asparagine 24. Mg(2+) contacts are provided by aspartate 103, aspartate 108, and aspartate 140.

This sequence belongs to the PPase family. Mg(2+) serves as cofactor. As to expression, expressed in metabolically active tissue such as root, shoot, embryo and aleurone.

It localises to the cytoplasm. It carries out the reaction diphosphate + H2O = 2 phosphate + H(+). In terms of biological role, may play a role in germination. The protein is Soluble inorganic pyrophosphatase (IPP) of Hordeum vulgare subsp. vulgare (Domesticated barley).